Here is a 1370-residue protein sequence, read N- to C-terminus: MRDKKGPVNKRVDFLSNKLNKYSIRKFTVGTASILIGSLMYLGTQQEAEAAENNIENPTTLKDNVQSKEVKIEEVTNKDTAPQGVEAKSEVTSNKDTIEHEASVKAEDISKKEDTPKEVANVAEVQPKSSVTHNAEAPKVRKARSVDEGSFDITRDSKNVVESTPITIQGKEHFEGYGSVDIQKNPTDLGVSEVTRFNVGNESNGLIGALQLKNKIDFSKDFNFKVRVANNHQSNTTGADGWGFLFSKGNAEEYLTNGGILGDKGLVNSGGFKIDTGYIYTSSMDKTEKQAGQGYRGYGAFVKNDSSGNSQMVGENIDKSKTNFLNYADNSTNTSDGKFHGQRLNDVILTYVASTGKMRAEYAGKTWETSITDLGLSKNQAYNFLITSSQRWGLNQGINANGWMRTDLKGSEFTFTPSAKNNNRIRKKVEEIPFKKERKFNPDLAPGTEKVTREGQKGEKTITTPTLKNPLTGEIISKGESKEEITKDPINELTEYGPETIAPGHRDEFDPKLPTGEKEEVPGKPGIKNPETGDVVRPPVDSVTKYGPVKGDSIVEKEEIPFEKERKFNPDLAPGTEKVTREGQKGEKTITTPTLKNPLTGEIISKGESKEEITKDPINELTEYGPETIAPGHRDEFDPKLPTGEKEEVPGKPGIKNPETGDVVRPPVDSVTKYGPVKGDSIVEKEEIPFEKERKFNPDLAPGTEKVTREGQKGEKTITTPTLKNPLTGEIISKGESKEEITKDPINELTEYGPETIAPGHRDEFDPKLPTGEKEEVPGKPGIKNPETGDVVRPPVDSVTKYGPVKGDSIVEKEEIPFEKERKFNPDLAPGTEKVTREGQKGEKTITTPTLKNPLTGEIISKGESKEEITKDPINELTEYGPETIAPGHRDEFDPKLPTGEKEEVPGKPGIKNPETGDVVRPPVDSVTKYGPVKGDSIVEKEEIPFKKERKFNPDLAPGTEKVTREGQKGEKTITTPTLKNPLTGEIISKGESKEEITKDPINELTEYGPETITPGHRDEFDPKLPTGEKEEVPGKPGIKNPETGDVVRPPVDSVTKYGPVKGDSIVEKEEIPFEKERKFNPDLAPGTEKVTREGQKGEKTITTPTLKNPLTGEIISKGESKEEITKDPVNELTEFGGEKIPQGHKDIFDPNLPTDQTEKVPGKPGIKNPDTGKVIEEPVDDVIKHGPKTGTPETKTVEIPFETKREFNPKLQPGEERVKQEGQPGSKTITTPITVNPLTGEKVGEGQPTEEITKQPVDKIVEFGGEKPKDPKGPENPEKPSRPTHPSGPVNPNNPGLSKDRAKPNGPVHSMDKNDKVKKSKIAKESVANQEKKRAELPKTGLESTQKGLIFSSIIGIAGLMLLARRRKN.

The signal sequence occupies residues 1–50 (MRDKKGPVNKRVDFLSNKLNKYSIRKFTVGTASILIGSLMYLGTQQEAEA). Disordered regions lie at residues 77–116 (NKDT…EDTP), 439–472 (KFNP…NPLT), and 495–1344 (EYGP…TGLE). Composition is skewed to basic and acidic residues over residues 96-116 (DTIE…EDTP), 450-460 (KVTREGQKGEK), 504-522 (GHRD…EEVP), 553-569 (SIVE…RKFN), 578-588 (KVTREGQKGEK), 605-618 (SKGE…KDPI), 632-650 (GHRD…EEVP), 681-697 (SIVE…RKFN), 706-716 (KVTREGQKGEK), 733-746 (SKGE…KDPI), 760-778 (GHRD…EEVP), 809-825 (SIVE…RKFN), 834-844 (KVTREGQKGEK), 861-874 (SKGE…KDPI), 888-906 (GHRD…EEVP), 937-953 (SIVE…RKFN), 962-972 (KVTREGQKGEK), 989-1002 (SKGE…KDPI), 1016-1034 (GHRD…EEVP), 1065-1081 (SIVE…RKFN), 1090-1100 (KVTREGQKGEK), 1117-1130 (SKGE…KDPV), 1174-1185 (KVIEEPVDDVIK), and 1202-1221 (FETK…RVKQ). Residues 418-500 (SAKNNNRIRK…NELTEYGPET (83 aa)) enclose the G5 1 domain. The G5 2 domain occupies 546–628 (YGPVKGDSIV…NELTEYGPET (83 aa)). Residues 674-756 (YGPVKGDSIV…NELTEYGPET (83 aa)) enclose the G5 3 domain. A G5 4 domain is found at 802-884 (YGPVKGDSIV…NELTEYGPET (83 aa)). The G5 5 domain occupies 930 to 1012 (YGPVKGDSIV…NELTEYGPET (83 aa)). The 83-residue stretch at 1058 to 1140 (YGPVKGDSIV…NELTEFGGEK (83 aa)) folds into the G5 6 domain. A G5 7 domain is found at 1186 to 1268 (HGPKTGTPET…DKIVEFGGEK (83 aa)). Residues 1224–1238 (QPGSKTITTPITVNP) are compositionally biased toward polar residues. The segment covering 1252 to 1282 (EITKQPVDKIVEFGGEKPKDPKGPENPEKPS) has biased composition (basic and acidic residues). An LPXTG sorting signal motif is present at residues 1338–1342 (LPKTG). Pentaglycyl murein peptidoglycan amidated threonine is present on threonine 1341. Residues 1342-1370 (GLESTQKGLIFSSIIGIAGLMLLARRRKN) constitute a propeptide, removed by sortase.

The protein resides in the secreted. It localises to the cell wall. The polypeptide is Putative surface protein SA2285 (Staphylococcus aureus (strain N315)).